We begin with the raw amino-acid sequence, 74 residues long: Putative defensin-like protein 128 (74 aa).

Residues 1-24 (MSKLTNVVIFIVFFLGMMAKETQG) form the signal peptide. Intrachain disulfides connect C28-C72, C37-C56, C42-C66, and C46-C68.

This sequence belongs to the DEFL family.

Its subcellular location is the secreted. The polypeptide is Putative defensin-like protein 128 (LCR8) (Arabidopsis thaliana (Mouse-ear cress)).